The chain runs to 639 residues: MFSKKKKKPLISMPSNFEHRVHTGFDKRENKYVGLPLQWASIVGNNQILKSSNRPLPLVDPSEITPTEILDLKTIVRPHHNNNKADTTSLNSSSTMMMGSMAPMNPMAPGAHPMMSHGPGMMMPPETGGIVLPKTSHVARSNSLRSSSPPRVRRVANVPPSVPEEEGPPAAGTPGVGGASSGGFKPPGAHPSLLYNSQHAHANGATGPLAVRTDQTNLQQYRSNLAPPSGGSMPQQQQTSPVGSVASGTRSNHSHTNNGNSGGSYPPMYPTSHQQQQQQQQQAKQGGDQNQNPLHPHAHPHPHHHQHLAKSASRASSSSGGASSAAQQASGASGGAAGQPKQDQRLTHEQFRAALQMVVSAGDPRENLDHFNKIGEGSTGTVCIATDKSTGRQVAVKKMDLRKQQRRELLFNEVVIMRDYHHPNIVETYSSFLVNDELWVVMEYLEGGALTDIVTHSRMDEEQIATVCKQCLKALAYLHSQGVIHRDIKSDSILLAADGRVKLSDFGFCAQVSQELPKRKSLVGTPYWMSPEVISRLPYGPEVDIWSLGIMVIEMVDGEPPFFNEPPLQAMRRIRDMQPPNLKNAHKVSPRLQSFLDRMLVRDPAQRATAAELLAHPFLRQAGPPSLLVPLMRNARHHP.

Residues 11-24 (ISMPSNFEHRVHTG) form the CRIB domain. The linker stretch occupies residues 25-367 (FDKRENKYVG…VVSAGDPREN (343 aa)). 2 disordered regions span residues 79 to 195 (HHNN…SLLY) and 222 to 345 (RSNL…QDQR). Composition is skewed to low complexity over residues 91–129 (NSSSTMMMGSMAPMNPMAPGAHPMMSHGPGMMMPPETGG), 138–159 (VARSNSLRSSSPPRVRRVANVP), 227–241 (PPSGGSMPQQQQTSP), and 274–295 (QQQQQQQQQAKQGGDQNQNPLH). Residues 296 to 308 (PHAHPHPHHHQHL) show a composition bias toward basic residues. Residues 309–331 (AKSASRASSSSGGASSAAQQASG) are compositionally biased toward low complexity. The region spanning 368 to 619 (LDHFNKIGEG…AAELLAHPFL (252 aa)) is the Protein kinase domain. Residues 374-382 (IGEGSTGTV) and Lys397 contribute to the ATP site. The active-site Proton acceptor is Asp487. Ser521 is subject to Phosphoserine. At Thr525 the chain carries Phosphothreonine.

The protein belongs to the protein kinase superfamily. STE Ser/Thr protein kinase family. STE20 subfamily. In terms of assembly, interacts tightly with GTP-bound but not GDP-bound Cdc42 and weakly with Rac1. Mg(2+) is required as a cofactor. Autophosphorylated when activated by Cdc42. Expressed in adult brain and eye. High levels detected in developing photoreceptor cells and future bristle cells, and lower levels in cone and pigment cells, as detected in third instar eye imaginal disks (at protein level).

It is found in the cell junction. The protein resides in the adherens junction. Its subcellular location is the cell membrane. It carries out the reaction L-seryl-[protein] + ATP = O-phospho-L-seryl-[protein] + ADP + H(+). The enzyme catalyses L-threonyl-[protein] + ATP = O-phospho-L-threonyl-[protein] + ADP + H(+). Its function is as follows. Involved in neurogenesis of the adult central nervous system, and together with Cdc42, regulates photoreceptor cell morphogenesis. Phosphorylates exogenous substrates when activated by Cdc42. The protein is Serine/threonine-protein kinase PAK mbt of Drosophila melanogaster (Fruit fly).